An 819-amino-acid chain; its full sequence is Plastid division protein CDP1, chloroplastic (819 aa).

A chloroplast-targeting transit peptide spans 1-76 (MPVAYTFPVL…NAAGGGIHVV (76 aa)). Residues 77-572 (DNAPSRTSSL…NKIWDEWLSQ (496 aa)) are Stromal-facing. The stretch at 419–439 (EAEALEKLKQLESNSDSAVRN) forms a coiled coil. The helical transmembrane segment at 573-593 (SSLIGRVSVVALLGCTVFFSL) threads the bilayer. Residues 594–819 (KLSGIRSGRL…FCQSDIQIQK (226 aa)) lie on the Chloroplast intermembrane side of the membrane. Residues 762 to 782 (IAGEAAEIEALLEEAAELVDE) adopt a coiled-coil conformation.

Self-interacts. Interacts (via N-terminus) with ARC3 (via MORN domains). Binds (via N-terminus) to FTSZ2 proteins, FTSZ2-1 and FTSZ2-2. Recruited ARC3 to the middle of the plastid where subsequent complex made of CDP1/PARC6, ARC3 and FtsZ proteins can form; this complex enhances the dynamics of Z rings during chloroplast division. Interacts (via C-terminus) with PDV1 (via C-terminus). Interacts with MIND1. As to expression, exclusively expressed in young green tissues such as young cotyledons, shoot apex, emerging leaves and budding inflorescence.

The protein localises to the plastid. It localises to the chloroplast inner membrane. Functionally, component of the plastid division machinery required for PDV1 localization to constriction sites. Involved in chloroplast division site placement. Required for the proper formation of FtsZ rings at the division site in nongreen plastids (e.g. etioplasts). Inhibits FtsZ assembly, functioning as an antagonistic regulator of FtsZ dynamics against ARC6, by recruiting ARC3 to the middle of the plastid to facilitate its interaction with FtsZ proteins. Required during stromule biogenesis in the leaf epidermis, especially in non-mesophyll cells plastids. The protein is Plastid division protein CDP1, chloroplastic of Arabidopsis thaliana (Mouse-ear cress).